The sequence spans 237 residues: Probable glutathione-independent glyoxalase SNO4 (237 aa).

Catalysis depends on residues Cys138, His139, and Glu170.

This sequence belongs to the peptidase C56 family. HSP31-like subfamily. Homodimer.

Its subcellular location is the cytoplasm. The protein localises to the P-body. The enzyme catalyses methylglyoxal + H2O = (R)-lactate + H(+). Catalyzes the conversion of methylglyoxal (MG) to D-lactate in a single glutathione (GSH)-independent step. May play a role in detoxifying endogenously produced glyoxals. Involved in protection against reactive oxygen species (ROS). Important for viability in stationary phase. May negatively regulate TORC1 in response to nutrient limitation. This is Probable glutathione-independent glyoxalase SNO4 from Saccharomyces cerevisiae (strain ATCC 204508 / S288c) (Baker's yeast).